A 52-amino-acid chain; its full sequence is KKGVTLREDDRFPCNAGNCACLPLDSYSYTCQSPTSSTANCEGNECRSEADW.

Positions 1–6 (KKGVTL) are excised as a propeptide. 3 disulfide bridges follow: C14–C31, C19–C41, and C21–C46.

As to expression, expressed by the venom duct.

It localises to the secreted. In terms of biological role, probable neurotoxin with unknown target. Possibly targets ion channels. In Californiconus californicus (California cone), this protein is Conotoxin Cal9.2c.